Consider the following 226-residue polypeptide: Cytochrome c oxidase subunit 2 (226 aa).

The Mitochondrial intermembrane portion of the chain corresponds to methionine 1 to serine 14. The chain crosses the membrane as a helical span at residues proline 15–methionine 45. The Mitochondrial matrix portion of the chain corresponds to leucine 46 to glutamine 59. The chain crosses the membrane as a helical span at residues glutamate 60–methionine 87. Residues aspartate 88–methionine 226 lie on the Mitochondrial intermembrane side of the membrane. Histidine 161, cysteine 196, glutamate 198, cysteine 200, histidine 204, and methionine 207 together coordinate Cu cation. A Mg(2+)-binding site is contributed by glutamate 198. Tyrosine 218 is subject to Phosphotyrosine.

The protein belongs to the cytochrome c oxidase subunit 2 family. Component of the cytochrome c oxidase (complex IV, CIV), a multisubunit enzyme composed of 14 subunits. The complex is composed of a catalytic core of 3 subunits MT-CO1, MT-CO2 and MT-CO3, encoded in the mitochondrial DNA, and 11 supernumerary subunits COX4I, COX5A, COX5B, COX6A, COX6B, COX6C, COX7A, COX7B, COX7C, COX8 and NDUFA4, which are encoded in the nuclear genome. The complex exists as a monomer or a dimer and forms supercomplexes (SCs) in the inner mitochondrial membrane with NADH-ubiquinone oxidoreductase (complex I, CI) and ubiquinol-cytochrome c oxidoreductase (cytochrome b-c1 complex, complex III, CIII), resulting in different assemblies (supercomplex SCI(1)III(2)IV(1) and megacomplex MCI(2)III(2)IV(2)). Found in a complex with TMEM177, COA6, COX18, COX20, SCO1 and SCO2. Interacts with TMEM177 in a COX20-dependent manner. Interacts with COX20. Interacts with COX16. It depends on Cu cation as a cofactor.

It is found in the mitochondrion inner membrane. The catalysed reaction is 4 Fe(II)-[cytochrome c] + O2 + 8 H(+)(in) = 4 Fe(III)-[cytochrome c] + 2 H2O + 4 H(+)(out). Its function is as follows. Component of the cytochrome c oxidase, the last enzyme in the mitochondrial electron transport chain which drives oxidative phosphorylation. The respiratory chain contains 3 multisubunit complexes succinate dehydrogenase (complex II, CII), ubiquinol-cytochrome c oxidoreductase (cytochrome b-c1 complex, complex III, CIII) and cytochrome c oxidase (complex IV, CIV), that cooperate to transfer electrons derived from NADH and succinate to molecular oxygen, creating an electrochemical gradient over the inner membrane that drives transmembrane transport and the ATP synthase. Cytochrome c oxidase is the component of the respiratory chain that catalyzes the reduction of oxygen to water. Electrons originating from reduced cytochrome c in the intermembrane space (IMS) are transferred via the dinuclear copper A center (CU(A)) of subunit 2 and heme A of subunit 1 to the active site in subunit 1, a binuclear center (BNC) formed by heme A3 and copper B (CU(B)). The BNC reduces molecular oxygen to 2 water molecules using 4 electrons from cytochrome c in the IMS and 4 protons from the mitochondrial matrix. The chain is Cytochrome c oxidase subunit 2 (MT-CO2) from Perognathus flavus (Silky pocket mouse).